Here is a 1376-residue protein sequence, read N- to C-terminus: Major capsid protein (1376 aa).

This sequence belongs to the herpesviridae major capsid protein family. As to quaternary structure, homomultimer. Makes the hexons and eleven out of twelve pentons. Interacts with triplex proteins 1/TRX1 and 2/TRX2; adjacent capsomers are linked together in groups of three by triplexes, heterotrimeric complexes composed of one molecule of TRX1 and two molecules of TRX2. Interacts with scaffold protein; this interaction allows efficient MCP transport to the host nucleus. Interacts with capsid vertex component 2/CVC2. Interacts with the small capsomere-interacting protein/SCP.

Its subcellular location is the virion. The protein localises to the host nucleus. Its function is as follows. Self-assembles to form an icosahedral capsid with a T=16 symmetry, about 200 nm in diameter, and consisting of 150 hexons and 12 pentons (total of 162 capsomers). Hexons form the edges and faces of the capsid and are each composed of six MCP molecules. In contrast, one penton is found at each of the 12 vertices. Eleven of the pentons are MCP pentamers, while the last vertex is occupied by the portal complex. The capsid is surrounded by a layer of proteinaceous material designated the tegument which, in turn, is enclosed in an envelope of host cell-derived lipids containing virus-encoded glycoproteins. The sequence is that of Major capsid protein from Equus caballus (Horse).